The sequence spans 188 residues: Inner kinetochore subunit cnl2 (188 aa).

The protein belongs to the NKP2 family. Component of the inner kinetochore constitutive centromere-associated network (CCAN) (also known as central kinetochore Sim4 complex in fission yeast), which is composed of at least cnl2, cnp3, cnp20, fta1, fta2, fta3, fta4, fta6, fta7, mal2, mhf1, mhf2, mis6, mis15, mis17, sim4 and wip1.

The protein resides in the cytoplasm. It is found in the nucleus. The protein localises to the chromosome. Its subcellular location is the centromere. It localises to the kinetochore. Functionally, component of the kinetochore, a multiprotein complex that assembles on centromeric DNA and attaches chromosomes to spindle microtubules, mediating chromosome segregation and sister chromatid segregation during meiosis and mitosis. Component of the inner kinetochore constitutive centromere-associated network (CCAN), which serves as a structural platform for outer kinetochore assembly. The chain is Inner kinetochore subunit cnl2 (cnl2) from Schizosaccharomyces pombe (strain 972 / ATCC 24843) (Fission yeast).